A 155-amino-acid chain; its full sequence is Small ribosomal subunit protein uS7cz/uS7cy (155 aa).

The protein belongs to the universal ribosomal protein uS7 family. In terms of assembly, part of the 30S ribosomal subunit.

It is found in the plastid. Its subcellular location is the chloroplast. Functionally, one of the primary rRNA binding proteins, it binds directly to 16S rRNA where it nucleates assembly of the head domain of the 30S subunit. This Cucumis sativus (Cucumber) protein is Small ribosomal subunit protein uS7cz/uS7cy (rps7-A).